We begin with the raw amino-acid sequence, 216 residues long: Adenylate kinase (216 aa).

10–15 is a binding site for ATP; that stretch reads GAGKGT. The NMP stretch occupies residues 30–59; sequence STGDIFRANIKEKTPLGIEAKRYIDNGQLV. Residues Thr31, Arg36, 57–59, 85–88, and Gln92 contribute to the AMP site; these read QLV and GFPR. The tract at residues 126–163 is LID; that stretch reads GRRVCTSCGASYHIRFNPPKIEGKCDICDNELIQRKDD. Arg127 lines the ATP pocket. Cys130 and Cys133 together coordinate Zn(2+). 136 to 137 contacts ATP; that stretch reads SY. Zn(2+) is bound by residues Cys150 and Cys153. AMP contacts are provided by Arg160 and Arg171. Residue Glu199 participates in ATP binding.

Belongs to the adenylate kinase family. As to quaternary structure, monomer.

The protein resides in the cytoplasm. It carries out the reaction AMP + ATP = 2 ADP. The protein operates within purine metabolism; AMP biosynthesis via salvage pathway; AMP from ADP: step 1/1. Its function is as follows. Catalyzes the reversible transfer of the terminal phosphate group between ATP and AMP. Plays an important role in cellular energy homeostasis and in adenine nucleotide metabolism. The protein is Adenylate kinase of Clostridium botulinum (strain Langeland / NCTC 10281 / Type F).